The sequence spans 327 residues: Olfactory receptor 226 (327 aa).

Residues 1–26 (MERRNHSGRVSEFVLLGFPAPAPLRV) lie on the Extracellular side of the membrane. N5 carries an N-linked (GlcNAc...) asparagine glycan. The chain crosses the membrane as a helical span at residues 27-50 (LLFFLSLLAYVLVLTENMLIIIAI). The Cytoplasmic portion of the chain corresponds to 51–58 (RNHPTLHK). Residues 59–80 (PMYFFLANMSFLEIWYVTVTIP) traverse the membrane as a helical segment. At 81–104 (KMLAGFIGSKENHGQLISFEACMT) the chain is on the extracellular side. The cysteines at positions 102 and 194 are disulfide-linked. Residues 105–125 (QLYFFLGLGCTECVLLAVMAY) traverse the membrane as a helical segment. Residues 126-144 (DRYVAICHPLHYPVIVSSR) lie on the Cytoplasmic side of the membrane. A helical membrane pass occupies residues 145–163 (LCVQMAAGSWAGGFGISMV). At 164 to 201 (KVFLISRLSYCGPNTINHFFCDVSPLLNLSCTDMSTAE) the chain is on the extracellular side. The chain crosses the membrane as a helical span at residues 202–224 (LTDFVLAIFILLGPLSVTGASYM). Topologically, residues 225–241 (AITGAVMRIPSAAGRHK) are cytoplasmic. Residues 242–265 (AFSTCASHLTVVIIFYAASIFIYA) form a helical membrane-spanning segment. At 266-277 (RPKALSAFDTNK) the chain is on the extracellular side. A helical transmembrane segment spans residues 278 to 297 (LVSVLYAVIVPLFNPIIYCL). The Cytoplasmic segment spans residues 298-327 (RNQDVKRALRRTLHLAQDQEANTNKGSKNG).

The protein belongs to the G-protein coupled receptor 1 family. Olfactory epithelium.

The protein localises to the cell membrane. Odorant receptor. This is Olfactory receptor 226 (Olr226) from Rattus norvegicus (Rat).